The chain runs to 273 residues: Probable ribosomal RNA small subunit methyltransferase A (273 aa).

S-adenosyl-L-methionine is bound by residues N26, L28, G53, E74, D98, and N113.

Belongs to the class I-like SAM-binding methyltransferase superfamily. rRNA adenine N(6)-methyltransferase family. RsmA subfamily.

It localises to the cytoplasm. Its function is as follows. Specifically dimethylates two adjacent adenosines in the loop of a conserved hairpin near the 3'-end of 16S rRNA in the 30S particle. May play a critical role in biogenesis of 30S subunits. This is Probable ribosomal RNA small subunit methyltransferase A from Methanothermobacter thermautotrophicus (strain ATCC 29096 / DSM 1053 / JCM 10044 / NBRC 100330 / Delta H) (Methanobacterium thermoautotrophicum).